A 989-amino-acid chain; its full sequence is Envelope glycoprotein gp160 (989 aa).

A signal peptide spans 1–106; that stretch reads MTSKESKPSR…CLMWEMRKGN (106 aa). Residues 107 to 838 lie on the Extracellular side of the membrane; it reads QCQAEEVIAL…WSSWFSWLKY (732 aa). Asn140, Asn161, Asn206, Asn258, Asn298, Asn364, Asn381, Asn387, Asn403, Asn435, Asn439, Asn470, Asn475, Asn481, Asn491, Asn501, Asn515, Asn527, Asn537, Asn542, Asn543, Asn551, and Asn568 each carry an N-linked (GlcNAc...) asparagine; by host glycan. The tract at residues 663-683 is fusion peptide; sequence GIGLVIVLAIMAIIAAAGAGL. Residues 695 to 745 adopt a coiled-coil conformation; it reads RTAVQSLANATAAQQEVLEASYAMVQHIAKGIRILEARVARVEALVDRMMV. Asn703 carries an N-linked (GlcNAc...) asparagine; by host glycan. The immunosuppression stretch occupies residues 729–745; it reads LEARVARVEALVDRMMV. N-linked (GlcNAc...) asparagine; by host glycans are attached at residues Asn771, Asn778, Asn794, and Asn828. The stretch at 786 to 821 forms a coiled coil; sequence EEIEQHEGNLSLLLREAALQVHIAQRDARRIPDAWK. The helical transmembrane segment at 839–859 threads the bilayer; it reads IPWIIMGIVGLICFRILMCVI. The Cytoplasmic segment spans residues 860–989; the sequence is SMCLQAYKQV…PTLENDYVEL (130 aa). Cys862 is lipidated: S-palmitoyl cysteine; by host.

The mature envelope protein (Env) consists of a trimer of SU-TM heterodimers attached by noncovalent interactions or by a labile interchain disulfide bond. Post-translationally, specific enzymatic cleavages in vivo yield mature proteins. Envelope glycoproteins are synthesized as an inactive precursor that is N-glycosylated and processed likely by host cell furin or by a furin-like protease in the Golgi to yield the mature SU and TM proteins. The cleavage site between SU and TM requires the minimal sequence [KR]-X-[KR]-R. The transmembrane protein is palmitoylated.

Its subcellular location is the virion membrane. It localises to the host cell membrane. The surface protein (SU) attaches the virus to the host cell by binding to its receptor. This interaction triggers the refolding of the transmembrane protein (TM) and is thought to activate its fusogenic potential by unmasking its fusion peptide. Fusion occurs at the host cell plasma membrane. Its function is as follows. The transmembrane protein (TM) acts as a class I viral fusion protein. Under the current model, the protein has at least 3 conformational states: pre-fusion native state, pre-hairpin intermediate state, and post-fusion hairpin state. During viral and target cell membrane fusion, the coiled coil regions (heptad repeats) assume a trimer-of-hairpins structure, positioning the fusion peptide in close proximity to the C-terminal region of the ectodomain. The formation of this structure appears to drive apposition and subsequent fusion of viral and target cell membranes. Membranes fusion leads to delivery of the nucleocapsid into the cytoplasm. This chain is Envelope glycoprotein gp160 (env), found in Ovis aries (Sheep).